Consider the following 172-residue polypeptide: Stellate orphon protein at 12D (172 aa).

This sequence belongs to the casein kinase 2 subunit beta family. Interacts in vitro with the casein kinase 2 alpha subunit (CkII-alpha). The relevance of such interaction is however unclear in vivo. As to expression, probably not expressed in wild-type flies. In males lacking the Y chromosome, it is testis-specific and constitutes the main component of star-shaped crystals.

Functionally, unknown. In males lacking the Y chromosome, its strong overexpression leads to the appearance of proteinaceous star-shaped crystals in the primary spermatocytes causing meiotic drive, possibly by interfering with normal casein kinase 2 activity. The sequence is that of Stellate orphon protein at 12D (Ste12DOR) from Drosophila melanogaster (Fruit fly).